A 242-amino-acid chain; its full sequence is Probable transcriptional regulatory protein Bcep18194_A5621 (242 aa).

The protein belongs to the TACO1 family.

It localises to the cytoplasm. The sequence is that of Probable transcriptional regulatory protein Bcep18194_A5621 from Burkholderia lata (strain ATCC 17760 / DSM 23089 / LMG 22485 / NCIMB 9086 / R18194 / 383).